The chain runs to 671 residues: Talaropentaene synthase (671 aa).

Residue aspartate 92 participates in Mg(2+) binding. The DDXXD 1 motif lies at 92-96 (DDMTD). Positions 223-231 (NDLYSYEKE) match the NSE/DTE motif. Residues lysine 389, arginine 392, and histidine 421 each coordinate isopentenyl diphosphate. The Mg(2+) site is built by aspartate 428 and aspartate 432. A DDXXD 2 motif is present at residues 428–432 (DDIED). Arginine 437 provides a ligand contact to dimethylallyl diphosphate. Arginine 438 provides a ligand contact to isopentenyl diphosphate. Dimethylallyl diphosphate contacts are provided by lysine 515, threonine 516, glutamine 551, asparagine 558, lysine 568, and lysine 578.

In the N-terminal section; belongs to the terpene synthase family. The protein in the C-terminal section; belongs to the FPP/GGPP synthase family. Requires Mg(2+) as cofactor.

The catalysed reaction is 5 isopentenyl diphosphate + dimethylallyl diphosphate = all-trans-hexaprenyl diphosphate + 5 diphosphate. The enzyme catalyses all-trans-hexaprenyl diphosphate = talaropentaene + diphosphate. In terms of biological role, bifunctional terpene synthase that converts dimethylallyl diphosphate (DMAPP) and isopentenyl diphosphate (IPP) into talaropentaene as a single product. The C-terminal prenyltransferase (PT) domain of MpMS catalyzes formation of hexaprenyl diphosphate (HexPP), whereas the N-terminal terpene cyclase (TC) domain catalyzes the cyclization of HexPP to talaropentaene. This chain is Talaropentaene synthase, found in Talaromyces verruculosus (Penicillium verruculosum).